The primary structure comprises 142 residues: Small ribosomal subunit protein bS6 (142 aa).

A compositionally biased stretch (basic and acidic residues) spans Asn110–Glu133. The tract at residues Asn110–Glu142 is disordered.

It belongs to the bacterial ribosomal protein bS6 family.

Its function is as follows. Binds together with bS18 to 16S ribosomal RNA. This Helicobacter pylori (strain HPAG1) protein is Small ribosomal subunit protein bS6.